A 324-amino-acid polypeptide reads, in one-letter code: Holliday junction branch migration complex subunit RuvB (324 aa).

The segment at 1 to 180 (MKSISCGKEY…FGIPLHLEFY (180 aa)) is large ATPase domain (RuvB-L). ATP-binding positions include I19, R20, G61, K64, T65, T66, 127–129 (EDF), R170, Y180, and R217. T65 provides a ligand contact to Mg(2+). The interval 181–251 (SFEELVNIIK…VADSVLLKLG (71 aa)) is small ATPAse domain (RuvB-S). The interval 254–324 (KMGLNKLDMN…TDQAKEYLSL (71 aa)) is head domain (RuvB-H). DNA contacts are provided by R307 and R312.

The protein belongs to the RuvB family. In terms of assembly, homohexamer. Forms an RuvA(8)-RuvB(12)-Holliday junction (HJ) complex. HJ DNA is sandwiched between 2 RuvA tetramers; dsDNA enters through RuvA and exits via RuvB. An RuvB hexamer assembles on each DNA strand where it exits the tetramer. Each RuvB hexamer is contacted by two RuvA subunits (via domain III) on 2 adjacent RuvB subunits; this complex drives branch migration. In the full resolvosome a probable DNA-RuvA(4)-RuvB(12)-RuvC(2) complex forms which resolves the HJ.

It localises to the cytoplasm. It carries out the reaction ATP + H2O = ADP + phosphate + H(+). Its function is as follows. The RuvA-RuvB-RuvC complex processes Holliday junction (HJ) DNA during genetic recombination and DNA repair, while the RuvA-RuvB complex plays an important role in the rescue of blocked DNA replication forks via replication fork reversal (RFR). RuvA specifically binds to HJ cruciform DNA, conferring on it an open structure. The RuvB hexamer acts as an ATP-dependent pump, pulling dsDNA into and through the RuvAB complex. RuvB forms 2 homohexamers on either side of HJ DNA bound by 1 or 2 RuvA tetramers; 4 subunits per hexamer contact DNA at a time. Coordinated motions by a converter formed by DNA-disengaged RuvB subunits stimulates ATP hydrolysis and nucleotide exchange. Immobilization of the converter enables RuvB to convert the ATP-contained energy into a lever motion, pulling 2 nucleotides of DNA out of the RuvA tetramer per ATP hydrolyzed, thus driving DNA branch migration. The RuvB motors rotate together with the DNA substrate, which together with the progressing nucleotide cycle form the mechanistic basis for DNA recombination by continuous HJ branch migration. Branch migration allows RuvC to scan DNA until it finds its consensus sequence, where it cleaves and resolves cruciform DNA. The polypeptide is Holliday junction branch migration complex subunit RuvB (Wolbachia sp. subsp. Drosophila simulans (strain wRi)).